The primary structure comprises 107 residues: Large ribosomal subunit protein uL24 (107 aa).

It belongs to the universal ribosomal protein uL24 family. In terms of assembly, part of the 50S ribosomal subunit.

One of two assembly initiator proteins, it binds directly to the 5'-end of the 23S rRNA, where it nucleates assembly of the 50S subunit. Its function is as follows. One of the proteins that surrounds the polypeptide exit tunnel on the outside of the subunit. The chain is Large ribosomal subunit protein uL24 from Neisseria gonorrhoeae (strain ATCC 700825 / FA 1090).